The chain runs to 679 residues: MTQDLERARERAEELRREIEHHNYLYYVLDRPAITDAQYDRLMRELERLEKQFPALVTPYSPTQRVGGRPREGFAAVRHLSPMLSLANAFDERELRDFDRRVRQALPGEQVRYVVELKIDGLAVSLYYENGILVRGATRGDGDTGEDITENLKTVRSVPLRLRRPVPALEVRGEAFMPKEAFSRLNEGREEAGETLFANPRNAAAGSLRQLDPKITASRQLDLFVYGTGYGEWGRAVFPDGERTAPQEHAEVLELLKELGFKVNPEYRLFDRLDELVEYCLGWQARRFELPYAVDGLVIKVNSLAQQERLGATMKSPRWAVAYKFPPEQAVTKVKDIFVRVGRTGVLTPTAELEPVRLAGTTVSRATLHNEDIIREKDIRIGDKVLVQKAGDIIPEVVAVLKEERTGAEKAWAMPGRCPSCGAGVVRAEGEAAVRCTNMACPARLQEGLIHFASRDAMDIAGLGPAVIAQLVSAGLVGDPADLYALRYEDLVPLERLGPKSARNLLEAIEASKGRSLARLIFALGIRHVGERAAKILANHYQSLSGLMSATQEELVNIPEIGPKIAASIVEFFSNEQNRKVIDKLVKAGVNTLTEKVIREGGGPLNGKVFVLTGVLKDFSRQQAQELIESLGGRISSSVSRNTDFVVAGENPGSKYEKALTLGVKILDENEFRELTGRK.

Residues 36–40 (DAQYD), 85–86 (SL), and E116 each bind NAD(+). K118 (N6-AMP-lysine intermediate) is an active-site residue. Positions 139, 174, 300, and 324 each coordinate NAD(+). 4 residues coordinate Zn(2+): C418, C421, C436, and C441. In terms of domain architecture, BRCT spans 600–679 (EGGGPLNGKV…NEFRELTGRK (80 aa)).

Belongs to the NAD-dependent DNA ligase family. LigA subfamily. Requires Mg(2+) as cofactor. Mn(2+) is required as a cofactor.

The catalysed reaction is NAD(+) + (deoxyribonucleotide)n-3'-hydroxyl + 5'-phospho-(deoxyribonucleotide)m = (deoxyribonucleotide)n+m + AMP + beta-nicotinamide D-nucleotide.. In terms of biological role, DNA ligase that catalyzes the formation of phosphodiester linkages between 5'-phosphoryl and 3'-hydroxyl groups in double-stranded DNA using NAD as a coenzyme and as the energy source for the reaction. It is essential for DNA replication and repair of damaged DNA. The protein is DNA ligase of Pelotomaculum thermopropionicum (strain DSM 13744 / JCM 10971 / SI).